The chain runs to 361 residues: 3-dehydroquinate synthase (361 aa).

NAD(+) contacts are provided by residues 72–77 (SGEKEK), 130–131 (TT), lysine 142, and lysine 151. Residues glutamate 184, histidine 247, and histidine 264 each coordinate Zn(2+).

Belongs to the sugar phosphate cyclases superfamily. Dehydroquinate synthase family. Requires Co(2+) as cofactor. Zn(2+) is required as a cofactor. NAD(+) serves as cofactor.

The protein resides in the cytoplasm. It carries out the reaction 7-phospho-2-dehydro-3-deoxy-D-arabino-heptonate = 3-dehydroquinate + phosphate. Its pathway is metabolic intermediate biosynthesis; chorismate biosynthesis; chorismate from D-erythrose 4-phosphate and phosphoenolpyruvate: step 2/7. Its function is as follows. Catalyzes the conversion of 3-deoxy-D-arabino-heptulosonate 7-phosphate (DAHP) to dehydroquinate (DHQ). In Bacillus cereus (strain ZK / E33L), this protein is 3-dehydroquinate synthase.